The chain runs to 70 residues: Large ribosomal subunit protein bL31 (70 aa).

Zn(2+)-binding residues include Cys16, Cys18, Cys37, and Cys40.

It belongs to the bacterial ribosomal protein bL31 family. Type A subfamily. As to quaternary structure, part of the 50S ribosomal subunit. Zn(2+) is required as a cofactor.

Functionally, binds the 23S rRNA. The polypeptide is Large ribosomal subunit protein bL31 (Shewanella oneidensis (strain ATCC 700550 / JCM 31522 / CIP 106686 / LMG 19005 / NCIMB 14063 / MR-1)).